The following is a 455-amino-acid chain: Chromosomal replication initiator protein DnaA (455 aa).

The tract at residues 1–70 (MTNETWVQVR…RMRLTEAGSP (70 aa)) is domain I, interacts with DnaA modulators. The interval 70 to 113 (PVERLEFAVSNTPRAPLKEVKAAAPAASPARARPAPPEEDLRGA) is domain II. The interval 87–109 (KEVKAAAPAASPARARPAPPEED) is disordered. The segment covering 91–102 (AAAPAASPARAR) has biased composition (low complexity). A domain III, AAA+ region region spans residues 114 to 335 (PLDARFTFDS…GALTRLFAFA (222 aa)). The ATP site is built by Gly158, Gly160, Lys161, and Thr162. The domain IV, binds dsDNA stretch occupies residues 336–455 (SLVGREITLD…LQLLRRLLQA (120 aa)).

Belongs to the DnaA family. As to quaternary structure, oligomerizes as a right-handed, spiral filament on DNA at oriC.

It is found in the cytoplasm. Its function is as follows. Plays an essential role in the initiation and regulation of chromosomal replication. ATP-DnaA binds to the origin of replication (oriC) to initiate formation of the DNA replication initiation complex once per cell cycle. Binds the DnaA box (a 9 base pair repeat at the origin) and separates the double-stranded (ds)DNA. Forms a right-handed helical filament on oriC DNA; dsDNA binds to the exterior of the filament while single-stranded (ss)DNA is stabiized in the filament's interior. The ATP-DnaA-oriC complex binds and stabilizes one strand of the AT-rich DNA unwinding element (DUE), permitting loading of DNA polymerase. After initiation quickly degrades to an ADP-DnaA complex that is not apt for DNA replication. Binds acidic phospholipids. The protein is Chromosomal replication initiator protein DnaA of Cereibacter sphaeroides (strain ATCC 17029 / ATH 2.4.9) (Rhodobacter sphaeroides).